Reading from the N-terminus, the 676-residue chain is SPARC-like protein 1 (676 aa).

The N-terminal stretch at 1 to 16 is a signal peptide; the sequence is MKTVLLLICLLGSAFT. Over residues 35-44 the composition is skewed to basic and acidic residues; it reads EKHKYTHSEM. Disordered stretches follow at residues 35–151, 173–369, and 385–437; these read EKHK…WALR, NTVG…GVYR, and SEDN…RNST. The span at 95–108 shows a compositional bias: polar residues; the sequence is KNSLRSINFLTLHS. Asparagine 182 carries N-linked (GlcNAc...) asparagine glycosylation. The segment covering 184 to 202 has biased composition (acidic residues); that stretch reads SEEEEAGEEEDEEWGEETD. Composition is skewed to basic and acidic residues over residues 249–266 and 273–291; these read EKFS…KEGK and NHNE…KEHF. Residues 312-328 show a composition bias toward acidic residues; sequence NAEEDDNDSGDDGEEDL. N-linked (GlcNAc...) asparagine glycosylation occurs at asparagine 318. A compositionally biased stretch (basic and acidic residues) spans 385-394; the sequence is SEDNHYHHEP. N-linked (GlcNAc...) asparagine glycosylation is present at asparagine 396. Low complexity predominate over residues 397 to 408; sequence SSSKQQLQTSSS. The N-linked (GlcNAc...) asparagine glycan is linked to asparagine 413. A compositionally biased stretch (basic and acidic residues) spans 415–433; that stretch reads TEHEDEVKTTGGSYHEESA. The N-linked (GlcNAc...) asparagine glycan is linked to asparagine 435. In terms of domain architecture, Follistatin-like spans 444–466; sequence LCRNFHCKRGKVCQADKQGKPSC. 7 cysteine pairs are disulfide-bonded: cysteine 445/cysteine 456, cysteine 450/cysteine 466, cysteine 468/cysteine 502, cysteine 474/cysteine 495, cysteine 484/cysteine 521, cysteine 527/cysteine 638, and cysteine 646/cysteine 662. The Kazal-like domain maps to 462 to 523; it reads GKPSCICQDP…HLDYMGACKH (62 aa). Asparagine 488 carries an N-linked (GlcNAc...) asparagine glycan. Residues 634–669 enclose the EF-hand domain; that stretch reads PMEHCITRFFQECDGDQDKLITLKEWCHCFAIKEED. Ca(2+) contacts are provided by aspartate 647, aspartate 649, aspartate 651, and glutamate 658.

It belongs to the SPARC family. As to expression, glial (Mueller) cells of the neuroretina.

The protein localises to the secreted. It is found in the extracellular space. Its subcellular location is the extracellular matrix. Its function is as follows. Could play a role in the late stage of neuroretina morphogenesis. The sequence is that of SPARC-like protein 1 (SPARCL1) from Coturnix japonica (Japanese quail).